We begin with the raw amino-acid sequence, 200 residues long: Cysteine dioxygenase type 1 (200 aa).

Residues H86, H88, and H140 each contribute to the Fe cation site. A cross-link (3'-(S-cysteinyl)-tyrosine (Cys-Tyr)) is located at residues 93-157 (CFLKMLQGNL…TEPAVSLHLY (65 aa)).

This sequence belongs to the cysteine dioxygenase family. In terms of assembly, monomer. It depends on Fe(2+) as a cofactor. Ni(2+) serves as cofactor. Requires Zn(2+) as cofactor. The thioether cross-link between Cys-93 and Tyr-157 plays a structural role through stabilizing the Fe(2+) ion, and prevents the production of highly damaging free hydroxyl radicals by holding the oxygen radical via hydroxyl hydrogen. As to expression, highly expressed in liver and placenta. Low expression in heart, brain and pancreas. Also detected in hepatoblastoma Hep-G2 cells.

The catalysed reaction is L-cysteine + O2 = 3-sulfino-L-alanine + H(+). Its pathway is organosulfur biosynthesis; taurine biosynthesis; hypotaurine from L-cysteine: step 1/2. In terms of biological role, catalyzes the oxidation of cysteine to cysteine sulfinic acid with addition of molecular dioxygen. The protein is Cysteine dioxygenase type 1 (CDO1) of Homo sapiens (Human).